The following is a 185-amino-acid chain: ATP synthase subunit b (185 aa).

Residues 28–48 form a helical membrane-spanning segment; it reads VVLVGFAVLMYIVVKFVVPMF.

This sequence belongs to the ATPase B chain family. F-type ATPases have 2 components, F(1) - the catalytic core - and F(0) - the membrane proton channel. F(1) has five subunits: alpha(3), beta(3), gamma(1), delta(1), epsilon(1). F(0) has three main subunits: a(1), b(2) and c(10-14). The alpha and beta chains form an alternating ring which encloses part of the gamma chain. F(1) is attached to F(0) by a central stalk formed by the gamma and epsilon chains, while a peripheral stalk is formed by the delta and b chains.

The protein localises to the cell membrane. Functionally, f(1)F(0) ATP synthase produces ATP from ADP in the presence of a proton or sodium gradient. F-type ATPases consist of two structural domains, F(1) containing the extramembraneous catalytic core and F(0) containing the membrane proton channel, linked together by a central stalk and a peripheral stalk. During catalysis, ATP synthesis in the catalytic domain of F(1) is coupled via a rotary mechanism of the central stalk subunits to proton translocation. In terms of biological role, component of the F(0) channel, it forms part of the peripheral stalk, linking F(1) to F(0). This chain is ATP synthase subunit b, found in Paenarthrobacter aurescens (strain TC1).